Consider the following 1829-residue polypeptide: Afadin (1829 aa).

Residues F39 to D133 form the Ras-associating 1 domain. The interval K129–S196 is disordered. Positions E146–R186 form a coiled coil. Positions T160–R172 are enriched in basic residues. Residues E173 to Q189 are compositionally biased toward basic and acidic residues. Residues S216, S246, and S256 each carry the phosphoserine modification. The 103-residue stretch at S246–P348 folds into the Ras-associating 2 domain. Residues K356–D371 show a composition bias toward basic and acidic residues. The interval K356–S377 is disordered. S391 and S424 each carry phosphoserine. The region spanning F441–V507 is the FHA domain. Phosphoserine is present on residues S512, S557, S562, S589, and S655. The interval D539 to A595 is disordered. The segment covering I576–T591 has biased composition (basic and acidic residues). In terms of domain architecture, Dilute spans N668–N915. The PDZ domain maps to V1014–G1100. Phosphoserine is present on residues S1090, S1114, S1133, S1147, S1150, S1179, S1180, S1189, and S1206. Residues S1114–T1230 form a disordered region. Positions I1120 to G1135 are enriched in basic and acidic residues. The segment covering Y1139–S1150 has biased composition (polar residues). A compositionally biased stretch (basic and acidic residues) spans S1159–S1179. The segment covering P1195–Q1217 has biased composition (polar residues). A phosphothreonine mark is found at T1218 and T1239. Residues S1245 and S1282 each carry the phosphoserine modification. Residues E1300 to S1309 show a composition bias toward basic and acidic residues. Disordered stretches follow at residues E1300–Q1533 and R1574–V1724. Residues S1316 to S1325 show a composition bias toward low complexity. The span at S1332–K1344 shows a compositional bias: polar residues. At S1335 the chain carries Phosphoserine. T1337 carries the phosphothreonine modification. Residues L1371–A1380 are compositionally biased toward pro residues. The segment covering N1401–A1412 has biased composition (low complexity). Over residues A1413–L1447 the composition is skewed to basic and acidic residues. The stretch at K1417–S1454 forms a coiled coil. Polar residues predominate over residues M1450–A1464. Residues T1494–L1510 are compositionally biased toward basic and acidic residues. Phosphoserine occurs at positions 1506 and 1517. Residues P1520–Q1533 show a composition bias toward basic and acidic residues. Positions E1530–K1564 form a coiled coil. Residues E1583–D1594 show a composition bias toward acidic residues. The stretch at Q1600–Q1672 forms a coiled coil. Positions L1602–E1682 are enriched in basic and acidic residues. Phosphoserine is present on S1701. The span at R1715 to V1724 shows a compositional bias: polar residues. The residue at position 1726 (S1726) is a Phosphoserine. The interval D1742 to K1829 is disordered. The segment covering N1753–G1764 has biased composition (polar residues). Basic and acidic residues predominate over residues A1768–D1781. Phosphoserine is present on residues S1779 and S1804. The segment covering V1809–K1829 has biased composition (basic and acidic residues). N6-acetyllysine is present on K1812.

Homodimer. Interacts with F-actin, nectin and NECTIN3. Essential for the association of nectin and E-cadherin. Isoform 2/s-afadin does not interact with F-actin. Interacts with ZO-1 and occludin, but probably in an indirect manner. Interacts with RIT1, RIT2, NRXN1 and BCR. Interacts with ADAM10; the interaction locks ADAM10 at adherens junctions following ADAM10 recruitment to adherens junctions by TSPAN33. In terms of tissue distribution, isoform 1 is widely expressed, including in heart, brain, spleen, lung, liver, skeletal muscle, kidney and testis. Isoform 2 is mainly expressed in the brain.

The protein localises to the cell junction. The protein resides in the adherens junction. In terms of biological role, belongs to an adhesion system, probably together with the E-cadherin-catenin system, which plays a role in the organization of homotypic, interneuronal and heterotypic cell-cell adherens junctions (AJs). Nectin- and actin-filament-binding protein that connects nectin to the actin cytoskeleton. May play a key role in the organization of epithelial structures of the embryonic ectoderm. Essential for the organization of adherens junctions. This chain is Afadin, found in Rattus norvegicus (Rat).